The following is a 1533-amino-acid chain: Glycogen debranching enzyme (1533 aa).

Phosphoserine is present on Ser-64. Residues Asp-527, His-530, and Asp-628 contribute to the active site.

It belongs to the glycogen debranching enzyme family. In terms of assembly, monomer. Interacts with NHLRC1/malin. Ubiquitinated. As to expression, ubiquitous. Expressed in striated skeletal muscle, heart, liver, spleen, skin, spinal cord, lung, kidney and testicle.

It localises to the cytoplasm. The catalysed reaction is Transfers a segment of a (1-&gt;4)-alpha-D-glucan to a new position in an acceptor, which may be glucose or a (1-&gt;4)-alpha-D-glucan.. The enzyme catalyses Hydrolysis of (1-&gt;6)-alpha-D-glucosidic branch linkages in glycogen phosphorylase limit dextrin.. Functionally, multifunctional enzyme acting as 1,4-alpha-D-glucan:1,4-alpha-D-glucan 4-alpha-D-glycosyltransferase and amylo-1,6-glucosidase in glycogen degradation. In Equus caballus (Horse), this protein is Glycogen debranching enzyme.